A 140-amino-acid polypeptide reads, in one-letter code: uncharacterized protein (140 aa).

A C2H2-type zinc finger spans residues 21–42 (CPYCNYTNADVKAIKKHIKSKH).

To M.jannaschii MJECL27.

This is an uncharacterized protein from Methanocaldococcus jannaschii (strain ATCC 43067 / DSM 2661 / JAL-1 / JCM 10045 / NBRC 100440) (Methanococcus jannaschii).